The sequence spans 146 residues: MKLHELKPSEGSRKERNRVGRGTGSGNGKTSGRGHKGQKARSGGGVRLGFEGGQLPLFRRIPKRGFTNINRKEFAIVNLDVLNRFEDGTEVTPELLIESGIIRNEKSGIKILSDGNIEKKLTVKANKFSAAAKEAIEAAGGKTEVI.

The segment covering Met-1–Arg-18 has biased composition (basic and acidic residues). Residues Met-1–Phe-50 are disordered. The span at Arg-21–Ser-31 shows a compositional bias: gly residues.

The protein belongs to the universal ribosomal protein uL15 family. As to quaternary structure, part of the 50S ribosomal subunit.

Binds to the 23S rRNA. This chain is Large ribosomal subunit protein uL15, found in Listeria welshimeri serovar 6b (strain ATCC 35897 / DSM 20650 / CCUG 15529 / CIP 8149 / NCTC 11857 / SLCC 5334 / V8).